Consider the following 327-residue polypeptide: DNA-directed RNA polymerase subunit alpha (327 aa).

The interval M1–E233 is alpha N-terminal domain (alpha-NTD). Positions E266–K327 are alpha C-terminal domain (alpha-CTD).

It belongs to the RNA polymerase alpha chain family. In terms of assembly, in plastids the minimal PEP RNA polymerase catalytic core is composed of four subunits: alpha, beta, beta', and beta''. When a (nuclear-encoded) sigma factor is associated with the core the holoenzyme is formed, which can initiate transcription.

It localises to the plastid. Its subcellular location is the chloroplast. It carries out the reaction RNA(n) + a ribonucleoside 5'-triphosphate = RNA(n+1) + diphosphate. In terms of biological role, DNA-dependent RNA polymerase catalyzes the transcription of DNA into RNA using the four ribonucleoside triphosphates as substrates. This is DNA-directed RNA polymerase subunit alpha from Barbarea verna (Land cress).